Reading from the N-terminus, the 677-residue chain is Polyunsaturated fatty acid lipoxygenase ALOX8 (677 aa).

The region spanning 2–125 (AKCRVRVSTG…ELVLREGAAK (124 aa)) is the PLAT domain. Ca(2+)-binding residues include glycine 15, glycine 17, aspartate 39, histidine 40, glycine 42, glutamate 44, aspartate 86, and alanine 87. The Lipoxygenase domain maps to 126–677 (VSWQDHHPTL…PPLIENSVSI (552 aa)). Fe cation contacts are provided by histidine 374, histidine 379, histidine 554, and isoleucine 677.

Belongs to the lipoxygenase family. Requires Fe cation as cofactor. In terms of tissue distribution, expressed in epidermis and brain. No expression found in heart, spleen, liver, skeletal muscle, kidney or testis.

Its subcellular location is the cytoplasm. It is found in the cytosol. The protein localises to the membrane. The catalysed reaction is (9Z,12Z)-octadecadienoate + O2 = (9S)-hydroperoxy-(10E,12Z)-octadecadienoate. It catalyses the reaction (5Z,8Z,11Z,14Z)-eicosatetraenoate + O2 = (8S)-hydroperoxy-(5Z,9E,11Z,14Z)-eicosatetraenoate. It carries out the reaction (15S)-hydroperoxy-(5Z,8Z,11Z,13E)-eicosatetraenoate + O2 = (8S,15S)-dihydroperoxy-(5Z,9E,11Z,13E)-eicosatetraenoate. The enzyme catalyses (8S)-hydroperoxy-(5Z,9E,11Z,14Z)-eicosatetraenoate + O2 = (8S,15S)-dihydroperoxy-(5Z,9E,11Z,13E)-eicosatetraenoate. The catalysed reaction is 1-octadecanoyl-2-(5Z,8Z,11Z,14Z-eicosatetraenoyl)-sn-glycero-3-phosphocholine + O2 = 1-octadecanoyl-2-(15-hydroperoxy-5Z,8Z,11Z,13E-eicosatetraenoyl)-sn-glycero-3-phosphocholine. It catalyses the reaction a 1-acyl-2-(5Z,8Z,11Z,14Z-eicosatetraenoyl)-sn-glycero-3-phospho-(1D-myo-inositol) + O2 = a 1-acyl-2-(15-hydroperoxy-5Z,8Z,11Z,13E-eicosatetraenoyl)-sn-glycero-3-phospho-(1D-myo-inositol). It carries out the reaction a 1-acyl-2-(8Z,11Z,14Z-eicosatrienoyl)-sn-glycero-3-phospho-(1D-myo-inositol) + O2 = a 1-acyl-2-(15-hydroperoxy-8Z,11Z,13E-eicosatrienoyl)-sn-glycero-3-phospho-(1D-myo-inositol). The enzyme catalyses (5Z,8Z,11Z,14Z)-eicosatetraenoate + O2 = 9-hydroperoxy-(5Z,7E,11Z,14Z)-eicosatetraenoate. The catalysed reaction is (5Z,8Z,11Z,14Z)-eicosatetraenoate + O2 = 11-hydroperoxy-(5Z,8Z,12E,14Z)-eicosatetraenoate. It catalyses the reaction (8Z,11Z,14Z)-eicosatrienoate + O2 = 15-hydroperoxy-(8Z,11Z,13E)-eicosatrienoate. It functions in the pathway lipid metabolism; hydroperoxy eicosatetraenoic acid biosynthesis. Functionally, non-heme iron-containing dioxygenase that catalyzes the stereo-specific peroxidation of free and esterified polyunsaturated fatty acids generating a spectrum of bioactive lipid mediators. Catalyzes the peroxidation of arachidonate and linoleate into (8S)-HPETE and (9S)-HPODE respectively. In addition to generate (8S)-HPETE from free arachidonic acid (AA), may produce other HETE isomers from phospholipid-esterified polyunsaturated fatty acids and minor products derived from (8S)-HPETE itself that may include leukotriene A4 and 8,15-diHPETE. With free arachidonate as substrate, has no detectable 15S-lipoxygenase activity and only displays a 8S-lipoxygenase activity. However may have a 15S-lipoxygenase activity with (8S)-HPETE to produce (8S,15S)-diHPETE and when oxidizes directly arachidonic acid esterified to membrane-bound phospholipids to produce a phospholipid-esterified 15-HpETE. May also catalyze (15S)-HPETE peroxidation to produce 8,15-diHPETE. May play a role in keratinocyte differentiation through activation of the peroxisome proliferator activated receptor signaling pathway. The protein is Polyunsaturated fatty acid lipoxygenase ALOX8 of Mus musculus (Mouse).